Reading from the N-terminus, the 281-residue chain is ATP synthase subunit a (281 aa).

A run of 6 helical transmembrane segments spans residues 50-70 (FSFT…LLLV), 116-136 (FFPC…QGMI), 145-165 (HFLI…IVGF), 172-192 (FLSF…LVLL), 219-239 (VKIL…FYFI), and 246-266 (FIVL…AYVF).

The protein belongs to the ATPase A chain family. As to quaternary structure, F-type ATPases have 2 components, CF(1) - the catalytic core - and CF(0) - the membrane proton channel. CF(1) has five subunits: alpha(3), beta(3), gamma(1), delta(1), epsilon(1). CF(0) has three main subunits: a, b and c.

Its subcellular location is the mitochondrion inner membrane. In terms of biological role, mitochondrial membrane ATP synthase (F(1)F(0) ATP synthase or Complex V) produces ATP from ADP in the presence of a proton gradient across the membrane which is generated by electron transport complexes of the respiratory chain. F-type ATPases consist of two structural domains, F(1) - containing the extramembraneous catalytic core and F(0) - containing the membrane proton channel, linked together by a central stalk and a peripheral stalk. During catalysis, ATP synthesis in the catalytic domain of F(1) is coupled via a rotary mechanism of the central stalk subunits to proton translocation. Key component of the proton channel; it may play a direct role in the translocation of protons across the membrane. The polypeptide is ATP synthase subunit a (ATP6) (Oenothera berteroana (Bertero's evening primrose)).